The chain runs to 647 residues: Acetyl-coenzyme A synthetase (647 aa).

Residues 190–193 (RGGK), Thr310, and Asn334 each bind CoA. Residues 386 to 388 (GEP), 410 to 415 (DTWWQT), Asp499, and Arg514 each bind ATP. Ser522 serves as a coordination point for CoA. Arg525 contributes to the ATP binding site. Positions 536, 538, and 541 each coordinate Mg(2+). A CoA-binding site is contributed by Arg583. At Lys608 the chain carries N6-acetyllysine.

Belongs to the ATP-dependent AMP-binding enzyme family. Mg(2+) serves as cofactor. Post-translationally, acetylated. Deacetylation by the SIR2-homolog deacetylase activates the enzyme.

It carries out the reaction acetate + ATP + CoA = acetyl-CoA + AMP + diphosphate. In terms of biological role, catalyzes the conversion of acetate into acetyl-CoA (AcCoA), an essential intermediate at the junction of anabolic and catabolic pathways. AcsA undergoes a two-step reaction. In the first half reaction, AcsA combines acetate with ATP to form acetyl-adenylate (AcAMP) intermediate. In the second half reaction, it can then transfer the acetyl group from AcAMP to the sulfhydryl group of CoA, forming the product AcCoA. In Xanthomonas oryzae pv. oryzae (strain MAFF 311018), this protein is Acetyl-coenzyme A synthetase.